The sequence spans 338 residues: Phosphate acyltransferase (338 aa).

The protein belongs to the PlsX family. In terms of assembly, homodimer. Probably interacts with PlsY.

The protein localises to the cytoplasm. The enzyme catalyses a fatty acyl-[ACP] + phosphate = an acyl phosphate + holo-[ACP]. It participates in lipid metabolism; phospholipid metabolism. Catalyzes the reversible formation of acyl-phosphate (acyl-PO(4)) from acyl-[acyl-carrier-protein] (acyl-ACP). This enzyme utilizes acyl-ACP as fatty acyl donor, but not acyl-CoA. In Mannheimia succiniciproducens (strain KCTC 0769BP / MBEL55E), this protein is Phosphate acyltransferase.